The sequence spans 304 residues: D-alanine--D-alanine ligase (304 aa).

The ATP-grasp domain occupies 103-301; that stretch reads KQVWLALGLP…FDDLVWRILE (199 aa). An ATP-binding site is contributed by 132-187; the sequence is VEMLGFPVIIKPAKEGSSVGVSRVFALEHLEEAVALAARYEGELLMEQLIEGDELT. Residues D254, E268, and N270 each coordinate Mg(2+).

The protein belongs to the D-alanine--D-alanine ligase family. Mg(2+) is required as a cofactor. It depends on Mn(2+) as a cofactor.

Its subcellular location is the cytoplasm. The catalysed reaction is 2 D-alanine + ATP = D-alanyl-D-alanine + ADP + phosphate + H(+). Its pathway is cell wall biogenesis; peptidoglycan biosynthesis. Cell wall formation. The chain is D-alanine--D-alanine ligase from Xylella fastidiosa (strain Temecula1 / ATCC 700964).